The sequence spans 510 residues: NAD(P)H-quinone oxidoreductase subunit 2 A, chloroplastic (510 aa).

12 helical membrane passes run 31–51, 59–79, 99–119, 124–144, 149–169, 183–203, 229–249, 295–315, 323–343, 354–374, 395–415, and 418–438; these read FIFP…IDLT, WFYF…LFRW, IFQF…VEYI, MAIT…MFLC, LITI…LSGY, YLLM…WLYG, ISIA…PAPF, WHLL…LLAI, MLAY…IVGD, YMLF…LFGL, ALSL…AGFF, and LYLF…IGLL.

It belongs to the complex I subunit 2 family. NDH is composed of at least 16 different subunits, 5 of which are encoded in the nucleus.

It is found in the plastid. Its subcellular location is the chloroplast thylakoid membrane. It carries out the reaction a plastoquinone + NADH + (n+1) H(+)(in) = a plastoquinol + NAD(+) + n H(+)(out). The enzyme catalyses a plastoquinone + NADPH + (n+1) H(+)(in) = a plastoquinol + NADP(+) + n H(+)(out). In terms of biological role, NDH shuttles electrons from NAD(P)H:plastoquinone, via FMN and iron-sulfur (Fe-S) centers, to quinones in the photosynthetic chain and possibly in a chloroplast respiratory chain. The immediate electron acceptor for the enzyme in this species is believed to be plastoquinone. Couples the redox reaction to proton translocation, and thus conserves the redox energy in a proton gradient. The sequence is that of NAD(P)H-quinone oxidoreductase subunit 2 A, chloroplastic from Oryza nivara (Indian wild rice).